The primary structure comprises 259 residues: PKHD-type hydroxylase PsycPRwf_1523 (259 aa).

Residues 80-180 (VIMPPLFSAY…RLAMVTWVQS (101 aa)) form the Fe2OG dioxygenase domain. Positions 98, 100, and 161 each coordinate Fe cation. R171 contributes to the 2-oxoglutarate binding site.

The cofactor is Fe(2+). L-ascorbate serves as cofactor.

The polypeptide is PKHD-type hydroxylase PsycPRwf_1523 (Psychrobacter sp. (strain PRwf-1)).